The following is a 219-amino-acid chain: Transcription factor MYB23 (219 aa).

HTH myb-type domains follow at residues 9–61 (EHEY…MNYL) and 62–116 (SPNV…SKKL). 2 DNA-binding regions (H-T-H motif) span residues 37–61 (WNRI…MNYL) and 89–112 (WSLI…NTHL).

Interacts with BHLH2/EGL3/MYC146, BHLH12/MYC1 and GL3. Expressed in roots, seed coats, leaves, stems and flowers. Detected specifically in trichomes, and in the cell division and differentiation zone of the root.

Its subcellular location is the nucleus. Its function is as follows. Transcription activator, when associated with BHLH2/EGL3/MYC146 or BHLH12/MYC1. Regulates the epidermal cell fate specification. Mediates the formation of columellae and accumulation of mucilages on seed coats. Controls the elongation of epidermal cells positively in roots but negatively in stems, leading to the promotion of primary roots elongation and repression of leaves and stems elongation, respectively. Ovoids ectopic root-hair formation, probably by inducing GL2 in roots. Controls trichome initiation and branching. The protein is Transcription factor MYB23 (MYB23) of Arabidopsis thaliana (Mouse-ear cress).